Here is a 350-residue protein sequence, read N- to C-terminus: TLC domain-containing protein fld-1 (350 aa).

A helical transmembrane segment spans residues 9 to 29 (TDLLGPVPTMFLWVIVSFAFF). The disordered stretch occupies residues 65–100 (GQEAENTENPPENEAEAGEQVEQEPEPDSRDLSAIP). Acidic residues predominate over residues 75 to 90 (PENEAEAGEQVEQEPE). The region spanning 102 to 279 (NKKWRISNEC…IINGLVIASL (178 aa)) is the TLC domain. A run of 6 helical transmembrane segments spans residues 111 to 131 (CVSL…LLYY), 145 to 165 (VAIN…VDLL), 173 to 193 (IIEL…TMFF), 195 to 215 (RFLG…FLHS), 229 to 249 (PSFR…RLCV), and 270 to 292 (IING…RLLA).

As to expression, ubiquitously expressed.

Its subcellular location is the cell membrane. Its function is as follows. Regulates the composition and fluidity of the plasma membrane. Inhibits the incorporation of membrane-fluidizing phospholipids containing omega-3 long-chain polyunsaturated fatty acids (LCPUFA) and thereby promotes membrane rigidity. Does not appear to have any effect on LCPUFA synthesis. The polypeptide is TLC domain-containing protein fld-1 (Caenorhabditis elegans).